We begin with the raw amino-acid sequence, 102 residues long: Parathymosin (102 aa).

The tract at residues 1–102 (MSEKSVEAAA…RQKTENGASA (102 aa)) is disordered. At serine 2 the chain carries N-acetylserine. The residue at position 2 (serine 2) is a Phosphoserine. Position 4 is an N6-acetyllysine (lysine 4). 2 positions are modified to phosphoserine: serine 5 and serine 13. A compositionally biased stretch (basic and acidic residues) spans 13 to 37 (SAKDLKEKKDKVEEKAGRKERKKEV). Residue lysine 15 is modified to N6-acetyllysine. The segment covering 38–75 (VEEEENGAEEEEEETAEDGEDDDEGDEEDEEEEEEEDE) has biased composition (acidic residues). Phosphothreonine is present on threonine 52. Lysine 92 is modified (N6-acetyllysine).

Belongs to the pro/parathymosin family.

Functionally, parathymosin may mediate immune function by blocking the effect of prothymosin alpha which confers resistance to certain opportunistic infections. This chain is Parathymosin (Ptms), found in Rattus norvegicus (Rat).